A 452-amino-acid chain; its full sequence is cAMP/cGMP-dependent 3',5'-cAMP/cGMP phosphodiesterase A (452 aa).

The signal sequence occupies residues 1–23; the sequence is MALNKKLISLLLLIFIILNIVNS. Residues 24 to 49 constitute a propeptide that is removed on maturation; that stretch reads HQQEDCDDDDEDIGISAERSERRSVK. N-linked (GlcNAc...) asparagine glycans are attached at residues asparagine 101, asparagine 141, and asparagine 277.

It belongs to the cyclic nucleotide phosphodiesterase class-II family.

The protein resides in the secreted. It is found in the extracellular space. Its subcellular location is the cell surface. It catalyses the reaction 3',5'-cyclic AMP + H2O = AMP + H(+). The catalysed reaction is 3',5'-cyclic GMP + H2O = GMP + H(+). Inhibited by dithiotreitol (DTT). Phosphodiesterase which displays a preference for cAMP over cGMP. Involved in the degradation of extracellular cAMP. Maintains the responsiveness of cells to the chemoattractant cAMP during the aggregation phase of development. The protein is cAMP/cGMP-dependent 3',5'-cAMP/cGMP phosphodiesterase A (pdsA) of Dictyostelium discoideum (Social amoeba).